Consider the following 299-residue polypeptide: Non-structural protein V (299 aa).

The tract at residues 41–99 is disordered; sequence DNPGQERATCREEKAGSSGLSKPCLSAIGSTEGGAPRIRGQGPGESDDDAETLGIPPRN. Residues 110-120 form an interaction with host STAT1 region; it reads YYVYDHSGEAV. The segment covering 134-145 has biased composition (low complexity); the sequence is GLDGDSTLSGGD. Residues 134–162 are disordered; that stretch reads GLDGDSTLSGGDNESENSDVDIGEPDTEG. Positions 146–160 are enriched in acidic residues; that stretch reads NESENSDVDIGEPDT. The Zn(2+) site is built by His232, Cys251, Cys255, Cys267, Cys269, Cys272, Cys276, and Cys279.

Belongs to the paramyxoviruses V protein family. In terms of assembly, interacts with host IFIH1/MDA5 and DHX58/LGP2; these interactions are involved in the inhibition of the host type I interferon signaling pathway. Interacts with host TYK2; this interaction inhibits the type I interferon signaling pathway without affecting the type II pathway. Interacts with host IRF7; this interaction inhibits IRF7 translocation to the nucleus. Interacts with host CHUK. Interacts with host RELA/p65; this interaction inhibits the nuclear translocation of NF-KappaB. Interacts (via N-terminus) with host STAT1 and JAK1; these interactions inhibit STAT1 phosphorylation by Jak1 and thereby the type I interferon signaling pathway. Interacts (via C-terminus) with host STAT2; this interaction is involved in the inhibition of the host type I interferon signaling pathway. Forms a complex with host PPP1CA and PPP1CC; this interaction prevents dephosphorylation of host IFIH1/MDA5 and leads to the inhibition of the host type I interferon signaling pathway. Interacts with host IRF9; this interaction prevents the binding of IRF9 to STAT2 and thereby the type I interferon signaling pathway.

Its subcellular location is the host cytoplasm. In terms of biological role, plays an essential role in the inhibition of host immune response. Prevents the establishment of cellular antiviral state by blocking interferon-alpha/beta (IFN-alpha/beta) production and signaling pathway. Interacts with host IFIH1/MDA5 and DHX58/LGP2 to inhibit the transduction pathway involved in the activation of IFN-beta promoter, thus protecting the virus against cell antiviral state. Blocks the type I interferon signaling pathway by interacting with host TYK2 and thereby inhibiting downstream STAT1 and STAT2 phosphorylation. Moderately affects the type II interferon signaling. This is Non-structural protein V (P/V) from Measles virus (strain Edmonston-Schwarz vaccine) (MeV).